The primary structure comprises 95 residues: Small ribosomal subunit protein bS16 (95 aa).

This sequence belongs to the bacterial ribosomal protein bS16 family.

In Thermotoga neapolitana (strain ATCC 49049 / DSM 4359 / NBRC 107923 / NS-E), this protein is Small ribosomal subunit protein bS16.